We begin with the raw amino-acid sequence, 122 residues long: Large ribosomal subunit protein uL14 (122 aa).

The protein belongs to the universal ribosomal protein uL14 family. Part of the 50S ribosomal subunit. Forms a cluster with proteins L3 and L19. In the 70S ribosome, L14 and L19 interact and together make contacts with the 16S rRNA in bridges B5 and B8.

Its function is as follows. Binds to 23S rRNA. Forms part of two intersubunit bridges in the 70S ribosome. This Rhodopirellula baltica (strain DSM 10527 / NCIMB 13988 / SH1) protein is Large ribosomal subunit protein uL14.